Reading from the N-terminus, the 364-residue chain is Capsular polysaccharide phosphotransferase cps1A (364 aa).

This sequence belongs to the stealth family.

In terms of biological role, part of a capsular polysaccharide synthesis locus. The sequence is that of Capsular polysaccharide phosphotransferase cps1A (cps1A) from Actinobacillus pleuropneumoniae (Haemophilus pleuropneumoniae).